The chain runs to 116 residues: Propanediol dehydratase-reactivating factor small subunit (116 aa).

E31 contacts Mg(2+).

It belongs to the DdrB/PduH family. Forms a heterotetramer PduG(2)/PduH(2). It depends on Mg(2+) as a cofactor.

It is found in the bacterial microcompartment. The catalysed reaction is ATP + H2O = ADP + phosphate + H(+). Its pathway is polyol metabolism; 1,2-propanediol degradation. Small subunit of the propanediol dehydratase-reactivating factor (DDR), which reactivates suicidally inhibited adenosylcobalamin-dependent propanediol dehydratase (diol dehydratase, DDH) found in the bacterial microcompartment (BMC) dedicated to 1,2-propanediol (1,2-PD) degradation. Reactivates inactivated DDH in the presence of ATP, Mg(2+) and free adenosylcobalamin (AdoCbl), by mediating the exchange of the tightly bound damaged cofactor AdoCbl for a free intact one. Its function is as follows. Expression of a cosmid containing the full 21-gene pdu operon in E.coli allows E.coli to grow on 1,2-propanediol (1,2-PD) with the appearance of bacterial microcompartments (BMC) in its cytoplasm. Functionally, the 1,2-PD-specific bacterial microcompartment (BMC) concentrates low levels of 1,2-PD catabolic enzymes, concentrates volatile reaction intermediates thus enhancing pathway flux and keeps the level of toxic, mutagenic propionaldehyde low. The protein is Propanediol dehydratase-reactivating factor small subunit of Citrobacter freundii.